A 250-amino-acid polypeptide reads, in one-letter code: Ribosomal RNA small subunit methyltransferase J (250 aa).

S-adenosyl-L-methionine-binding positions include 101 to 102, 117 to 118, 153 to 154, and Asp-171; these read RD, ER, and SS.

It belongs to the methyltransferase superfamily. RsmJ family.

The protein localises to the cytoplasm. It carries out the reaction guanosine(1516) in 16S rRNA + S-adenosyl-L-methionine = N(2)-methylguanosine(1516) in 16S rRNA + S-adenosyl-L-homocysteine + H(+). Functionally, specifically methylates the guanosine in position 1516 of 16S rRNA. This is Ribosomal RNA small subunit methyltransferase J from Erwinia tasmaniensis (strain DSM 17950 / CFBP 7177 / CIP 109463 / NCPPB 4357 / Et1/99).